The following is a 471-amino-acid chain: Cytolysin (471 aa).

An N-terminal signal peptide occupies residues 1–20 (MKKMTLFTLSLLATAVQVGA). The region spanning 338-465 (AHVTLQSLSN…EANQARWKPT (128 aa)) is the Ricin B-type lectin domain.

The protein belongs to the HlyA hemolysin family.

Bacterial hemolysins are exotoxins that attack blood cell membranes and cause cell rupture by mechanisms not clearly defined. The protein is Cytolysin (vvhA) of Vibrio vulnificus (strain CMCP6).